Here is a 257-residue protein sequence, read N- to C-terminus: Deoxyribose-phosphate aldolase (257 aa).

Aspartate 102 functions as the Proton donor/acceptor in the catalytic mechanism. Residue lysine 166 is the Schiff-base intermediate with acetaldehyde of the active site. Lysine 198 (proton donor/acceptor) is an active-site residue.

The protein belongs to the DeoC/FbaB aldolase family. DeoC type 2 subfamily.

The protein resides in the cytoplasm. It carries out the reaction 2-deoxy-D-ribose 5-phosphate = D-glyceraldehyde 3-phosphate + acetaldehyde. It functions in the pathway carbohydrate degradation; 2-deoxy-D-ribose 1-phosphate degradation; D-glyceraldehyde 3-phosphate and acetaldehyde from 2-deoxy-alpha-D-ribose 1-phosphate: step 2/2. Its function is as follows. Catalyzes a reversible aldol reaction between acetaldehyde and D-glyceraldehyde 3-phosphate to generate 2-deoxy-D-ribose 5-phosphate. This is Deoxyribose-phosphate aldolase from Shewanella loihica (strain ATCC BAA-1088 / PV-4).